We begin with the raw amino-acid sequence, 363 residues long: Probable dual-specificity RNA methyltransferase RlmN (363 aa).

The active-site Proton acceptor is the Glu-106. The Radical SAM core domain maps to 112-345; sequence HEYGNSVCVT…VTIRREQGHD (234 aa). A disulfide bridge connects residues Cys-119 and Cys-350. Positions 126, 130, and 133 each coordinate [4Fe-4S] cluster. Residues 176–177, Ser-208, 231–233, and Asn-307 each bind S-adenosyl-L-methionine; these read GE and SLH. Cys-350 acts as the S-methylcysteine intermediate in catalysis.

Belongs to the radical SAM superfamily. RlmN family. The cofactor is [4Fe-4S] cluster.

Its subcellular location is the cytoplasm. The enzyme catalyses adenosine(2503) in 23S rRNA + 2 reduced [2Fe-2S]-[ferredoxin] + 2 S-adenosyl-L-methionine = 2-methyladenosine(2503) in 23S rRNA + 5'-deoxyadenosine + L-methionine + 2 oxidized [2Fe-2S]-[ferredoxin] + S-adenosyl-L-homocysteine. It catalyses the reaction adenosine(37) in tRNA + 2 reduced [2Fe-2S]-[ferredoxin] + 2 S-adenosyl-L-methionine = 2-methyladenosine(37) in tRNA + 5'-deoxyadenosine + L-methionine + 2 oxidized [2Fe-2S]-[ferredoxin] + S-adenosyl-L-homocysteine. Functionally, specifically methylates position 2 of adenine 2503 in 23S rRNA and position 2 of adenine 37 in tRNAs. In Bacillus subtilis (strain 168), this protein is Probable dual-specificity RNA methyltransferase RlmN.